A 552-amino-acid polypeptide reads, in one-letter code: Segmentation polarity homeobox protein engrailed (552 aa).

A compositionally biased stretch (low complexity) spans 93–108 (SGSGSPASCSTPASST). Disordered stretches follow at residues 93–112 (SGSG…PLTI), 130–171 (THTT…TAKP), 309–419 (PAAP…GGKN), and 433–460 (DRPS…PRTA). Over residues 135-151 (EEEEAEEDDDIDVDVDD) the composition is skewed to acidic residues. Residues 317–382 (PPLSSSASSL…SGSGVNASSP (66 aa)) show a composition bias toward low complexity. A compositionally biased stretch (basic and acidic residues) spans 446–457 (QPKDKTNDEKRP). Residues 454 to 513 (EKRPRTAFSSEQLARLKREFNENRYLTERRRQQLSSELGLNEAQIKIWFQNKRAKIKKST) constitute a DNA-binding region (homeobox).

The protein belongs to the engrailed homeobox family. Post-translationally, phosphorylated. Phosphorylation may directly or allosterically modify its function.

Its subcellular location is the nucleus. Functionally, this protein specifies the body segmentation pattern. It is required for the development of the central nervous system. Transcriptional regulator that represses activated promoters. Wg signaling operates by inactivating the SGG repression of EN autoactivation. The polypeptide is Segmentation polarity homeobox protein engrailed (en) (Drosophila melanogaster (Fruit fly)).